The following is a 906-amino-acid chain: Ribonucleoside-diphosphate reductase large subunit-like protein (906 aa).

Disordered regions lie at residues 1 to 70 (MNPA…AGNT) and 89 to 129 (VSWR…LSTF). Positions 98 to 109 (PDGTPSVLSLTR) are enriched in polar residues.

It belongs to the ribonucleoside diphosphate reductase large chain family.

The protein resides in the virion. It is found in the host cytoplasm. Functionally, does not possess a ribonucleotide reductase activity. Betaherpesviruses probably use another strategy to expand the dNTP pool in a quiescent host cell. The chain is Ribonucleoside-diphosphate reductase large subunit-like protein from Human cytomegalovirus (strain AD169) (HHV-5).